The sequence spans 517 residues: Steroid 17-alpha-hydroxylase/17,20 lyase (517 aa).

Heme is bound at residue cysteine 451.

Belongs to the cytochrome P450 family. The cofactor is heme.

It localises to the membrane. The enzyme catalyses a C21-steroid + reduced [NADPH--hemoprotein reductase] + O2 = a 17alpha-hydroxy-C21-steroid + oxidized [NADPH--hemoprotein reductase] + H2O + H(+). The catalysed reaction is 17alpha-hydroxyprogesterone + reduced [NADPH--hemoprotein reductase] + O2 = androst-4-ene-3,17-dione + acetate + oxidized [NADPH--hemoprotein reductase] + H2O + 2 H(+). It carries out the reaction 17alpha-hydroxypregnenolone + reduced [NADPH--hemoprotein reductase] + O2 = 3beta-hydroxyandrost-5-en-17-one + acetate + oxidized [NADPH--hemoprotein reductase] + H2O + 2 H(+). It participates in lipid metabolism; steroid biosynthesis. In terms of biological role, conversion of pregnenolone and progesterone to their 17-alpha-hydroxylated products and subsequently to dehydroepiandrosterone (DHEA) and androstenedione. Catalyzes both the 17-alpha-hydroxylation and the 17,20-lyase reaction. The polypeptide is Steroid 17-alpha-hydroxylase/17,20 lyase (cyp17a1) (Oryzias latipes (Japanese rice fish)).